Reading from the N-terminus, the 173-residue chain is Putative metal-dependent hydrolase BA_2700/GBAA_2700/BAS2515 (173 aa).

Positions 65, 156, and 160 each coordinate Zn(2+).

Belongs to the metal hydrolase YfiT family. Homodimer. Zn(2+) serves as cofactor.

The protein resides in the cytoplasm. In terms of biological role, possible metal-dependent hydrolase. This is Putative metal-dependent hydrolase BA_2700/GBAA_2700/BAS2515 from Bacillus anthracis.